We begin with the raw amino-acid sequence, 100 residues long: Pancreatic trypsin inhibitor (100 aa).

An N-terminal signal peptide occupies residues 1 to 21 (MKMSRLCLSVALLVLLGTLAA). Residues 22 to 35 (STPGCDTSNQAKAQ) constitute a propeptide that is removed on maturation. One can recognise a BPTI/Kunitz inhibitor domain in the interval 40 to 90 (CLEPPYTGPCKARIIRYFYNAKAGLCQTFVYGGCRAKRNNFKSAEDCMRTC). 3 disulfide bridges follow: Cys40–Cys90, Cys49–Cys73, and Cys65–Cys86. Positions 94 to 100 (IGPWENL) are excised as a propeptide.

It is found in the secreted. Inhibits trypsin, kallikrein, chymotrypsin, and plasmin. This Bos taurus (Bovine) protein is Pancreatic trypsin inhibitor.